Consider the following 965-residue polypeptide: Meiosis-specific coiled-coil domain-containing protein MEIOC (965 aa).

Disordered regions lie at residues 1–22 (MEVS…EGPE) and 946–965 (VHES…TSKH). Over residues 949-965 (SINSSNPMNQRGETSKH) the composition is skewed to polar residues.

As to quaternary structure, interacts with YTHDC2; binds transcripts that regulate the mitotic cell cycle inhibiting progression into metaphase, thereby allowing meiotic prophase to proceed normally. Interacts with RBM46. In terms of tissue distribution, expressed specifically in fetal ovary and postnatal and adult testes (at protein level). In adult testis expressed in spermatocytes, beginning in preleptotene and extending through most stages of meiotic prophase I, including leptotene, zygotene, and pachytene.

Its subcellular location is the cytoplasm. It localises to the nucleus. Functionally, is required for meiosis completion in both male and female germ cells. Confers stability to numerous meiotic mRNAs in gonads allowing proper initiation and progression into meiosis prophase I. The function may involve YTHDC2 and is independent of induction by retinoic acid (RA). Maintains an extended meiotic prophase I by properly promoting the transition from a mitotic to a meiotic cell cycle program by binding transcripts through its interaction with YTHDC2 that regulate the mitotic cell cycle. The polypeptide is Meiosis-specific coiled-coil domain-containing protein MEIOC (Mus musculus (Mouse)).